Consider the following 386-residue polypeptide: ORC1-type DNA replication protein 3 (386 aa).

Residues 65-69 and Tyr-206 each bind ATP; that span reads TGKTF.

This sequence belongs to the CDC6/cdc18 family.

In terms of biological role, involved in regulation of DNA replication. This Sulfurisphaera tokodaii (strain DSM 16993 / JCM 10545 / NBRC 100140 / 7) (Sulfolobus tokodaii) protein is ORC1-type DNA replication protein 3 (cdc6-3).